A 113-amino-acid polypeptide reads, in one-letter code: Dolichyl-diphosphooligosaccharide--protein glycosyltransferase subunit DAD1 (113 aa).

S2 bears the N-acetylserine mark. Topologically, residues 2–30 are cytoplasmic; the sequence is SASVLSVISRFLEEYLSSTPQRLKLLDAY. A helical transmembrane segment spans residues 31–51; that stretch reads LLYILLTGALQFGYCLLVGTF. Residue P52 is a topological domain, lumenal. The helical transmembrane segment at 53 to 73 threads the bilayer; sequence FNSFLSGFISCVGSFILAVCL. Topologically, residues 74–92 are cytoplasmic; that stretch reads RIQINPQNKADFQGISPER. A helical transmembrane segment spans residues 93 to 113; sequence AFADFLFASTILHLVVMNFVG.

It belongs to the DAD/OST2 family. Component of the oligosaccharyltransferase (OST) complex. OST exists in two different complex forms which contain common core subunits RPN1, RPN2, OST48, OST4, DAD1 and TMEM258, either STT3A or STT3B as catalytic subunits, and form-specific accessory subunits. STT3A complex assembly occurs through the formation of 3 subcomplexes. Subcomplex 1 contains RPN1 and TMEM258, subcomplex 2 contains the STT3A-specific subunits STT3A, DC2/OSTC, and KCP2 as well as the core subunit OST4, and subcomplex 3 contains RPN2, DAD1, and OST48. The STT3A complex can form stable complexes with the Sec61 complex or with both the Sec61 and TRAP complexes.

It is found in the endoplasmic reticulum membrane. Its pathway is protein modification; protein glycosylation. In terms of biological role, subunit of the oligosaccharyl transferase (OST) complex that catalyzes the initial transfer of a defined glycan (Glc(3)Man(9)GlcNAc(2) in eukaryotes) from the lipid carrier dolichol-pyrophosphate to an asparagine residue within an Asn-X-Ser/Thr consensus motif in nascent polypeptide chains, the first step in protein N-glycosylation. N-glycosylation occurs cotranslationally and the complex associates with the Sec61 complex at the channel-forming translocon complex that mediates protein translocation across the endoplasmic reticulum (ER). All subunits are required for a maximal enzyme activity. The sequence is that of Dolichyl-diphosphooligosaccharide--protein glycosyltransferase subunit DAD1 from Sus scrofa (Pig).